Here is a 368-residue protein sequence, read N- to C-terminus: Galanin receptor type 3 (368 aa).

The Extracellular portion of the chain corresponds to 1 to 20 (MADAQNISLDSPGSVGAVAV). N-linked (GlcNAc...) asparagine glycosylation is present at Asn-6. The helical transmembrane segment at 21-41 (PVVFALIFLLGTVGNGLVLAV) threads the bilayer. Topologically, residues 42-57 (LLQPGPSAWQEPGSTT) are cytoplasmic. Residues 58–78 (DLFILNLAVADLCFILCCVPF) form a helical membrane-spanning segment. Over 79 to 96 (QATIYTLDAWLFGALVCK) the chain is Extracellular. The cysteines at positions 95 and 172 are disulfide-linked. A helical transmembrane segment spans residues 97-118 (AVHLLIYLTMYASSFTLAAVSV). Topologically, residues 119–138 (DRYLAVRHPLRSRALRTPRN) are cytoplasmic. Residues 139–159 (ARAAVGLVWLLAALFSAPYLS) form a helical membrane-spanning segment. The Extracellular portion of the chain corresponds to 160-184 (YYGTVRYGALELCVPAWEDARRRAL). Residues 185-205 (DVATFAAGYLLPVAVVSLAYG) traverse the membrane as a helical segment. The Cytoplasmic portion of the chain corresponds to 206–236 (RTLRFLWAAVGPAGAAAAEARRRATGRAGRA). The chain crosses the membrane as a helical span at residues 237–257 (MLAVAALYALCWGPHHALILC). The Extracellular segment spans residues 258–259 (FW). Residues 260–280 (YGRFAFSPATYACRLASHCLA) form a helical membrane-spanning segment. The Cytoplasmic portion of the chain corresponds to 281-368 (YANSCLNPLV…HGGEAARGPE (88 aa)). Cys-308 carries the S-palmitoyl cysteine lipid modification. The tract at residues 317–368 (RRALRRVRPASSGPPGCPGDARPSGRLLAGGGQGPEPREGPVHGGEAARGPE) is disordered.

This sequence belongs to the G-protein coupled receptor 1 family.

The protein localises to the cell membrane. Its function is as follows. Receptor for the hormone galanin. Receptor for the hormone spexin-1. This is Galanin receptor type 3 (GALR3) from Homo sapiens (Human).